A 35-amino-acid polypeptide reads, in one-letter code: Mu-theraphotoxin-Hd1a (35 aa).

Disulfide bonds link C2-C17, C9-C24, and C16-C31.

The protein belongs to the neurotoxin 10 (Hwtx-1) family. 22 (Htx-4) subfamily. As to expression, expressed by the venom gland.

Its subcellular location is the secreted. Its function is as follows. Gating-modifier toxin that reversibly and voltage-independently inhibits human Nav1.1/SCN1A and Nav1.7/SCN9A (IC(50)=111 nM). It also shows moderate inhibition on Nav1.2/SCN2A (1 uM inhibits current by 55%), Nav1.6/SCN8A (31%), Nav1.3/SCN5A (27%) and Nav1.4/SCN4A (23%). This toxin inhibits Nav1.7/SCN9A by interacting with the S3b-S4 paddle motif in channel domain II. This is Mu-theraphotoxin-Hd1a from Cyriopagopus doriae (Tarantula spider).